Here is a 223-residue protein sequence, read N- to C-terminus: Peptidyl-tRNA hydrolase (223 aa).

TRNA is bound at residue Tyr14. His19 serves as the catalytic Proton acceptor. Tyr64, Asn66, and Asn112 together coordinate tRNA. Residues Met183 to Pro223 are disordered.

The protein belongs to the PTH family. As to quaternary structure, monomer.

The protein resides in the cytoplasm. It catalyses the reaction an N-acyl-L-alpha-aminoacyl-tRNA + H2O = an N-acyl-L-amino acid + a tRNA + H(+). Hydrolyzes ribosome-free peptidyl-tRNAs (with 1 or more amino acids incorporated), which drop off the ribosome during protein synthesis, or as a result of ribosome stalling. Its function is as follows. Catalyzes the release of premature peptidyl moieties from peptidyl-tRNA molecules trapped in stalled 50S ribosomal subunits, and thus maintains levels of free tRNAs and 50S ribosomes. The protein is Peptidyl-tRNA hydrolase of Sorangium cellulosum (strain So ce56) (Polyangium cellulosum (strain So ce56)).